We begin with the raw amino-acid sequence, 369 residues long: Maltose/maltodextrin import ATP-binding protein MalK (369 aa).

Positions 4 to 234 constitute an ABC transporter domain; it reads VQLRNVTKAW…PADRFVAGFI (231 aa). 36-43 contacts ATP; it reads GPSGCGKS.

Belongs to the ABC transporter superfamily. Maltooligosaccharide importer (TC 3.A.1.1.1) family. The complex is composed of two ATP-binding proteins (MalK), two transmembrane proteins (MalG and MalK) and a solute-binding protein (MalE).

Its subcellular location is the cell inner membrane. The catalysed reaction is D-maltose(out) + ATP + H2O = D-maltose(in) + ADP + phosphate + H(+). Part of the ABC transporter complex MalEFGK involved in maltose/maltodextrin import. Responsible for energy coupling to the transport system. The sequence is that of Maltose/maltodextrin import ATP-binding protein MalK from Salmonella choleraesuis (strain SC-B67).